Consider the following 227-residue polypeptide: Calcium-binding protein 1 (227 aa).

Gly2 is lipidated: N-myristoyl glycine. A lipid anchor (S-palmitoyl cysteine) is attached at Cys4. 4 EF-hand domains span residues 82–117 (EEIEELREAFREFDKDKDGYINCRDLGNCMRTMGYM), 136–153 (GHVDFDDFVELMGPKLLA), 159–194 (IGVKELRDAFREFDTNGDGEISTSELREAMRKLLGH), and 196–227 (VGHRDIEEIIRDVDLNGDGRVDFEEFVRMMSR). Residues Asp95, Asp97, Asp99, Tyr101, and Asp106 each coordinate Ca(2+). The Ca(2+) site is built by Asp172, Asn174, Asp176, and Glu178. Position 180 is a phosphoserine (Ser180). Ca(2+) contacts are provided by Glu183, Asp209, Asn211, Asp213, Arg215, and Glu220.

In terms of assembly, homodimer; when bound to calcium or magnesium. Interacts (via C-terminus) with ITPR1, ITPR2 and ITPR3. This binding is calcium dependent and the interaction correlates with calcium concentration. An additional calcium-independent interaction with the N-terminus of ITPR1 results in a decreased InsP(3) binding to the receptor. Interacts with CACNA1A (via C-terminal CDB motif) in the pre- and postsynaptic membranes. Interacts with CACNA1D and CACNA1C (via C-terminal C and IQ motifs). The binding to the C motif is calcium independent whereas the binding to IQ requires the presence of calcium and is mutually exclusive with calmodulin binding. Interacts with TRPC5 (via C-terminus). Interacts (via EF-hands 1 and 2) at microtubules with MAP1LC3B. Interacts with MYO1C. Interacts (via EF-hands 1 and 2) with NSMF (via the central NLS-containing motif region), the interaction occurs in a calcium dependent manner after synaptic NMDA receptor stimulation and prevents nuclear import of NSMF. Interacts with SPACA9 homolog. In terms of processing, phosphorylated. The phosphorylation regulates the activity. As to expression, expressed in the inner retina, specifically in amacrine cells and in cone OFF-bipolar cells (at protein level).

Its function is as follows. Modulates calcium-dependent activity of inositol 1,4,5-triphosphate receptors (ITPRs). Inhibits agonist-induced intracellular calcium signaling. Enhances inactivation and does not support calcium-dependent facilitation of voltage-dependent P/Q-type calcium channels. Causes calcium-dependent facilitation and inhibits inactivation of L-type calcium channels by binding to the same sites as calmodulin in the C-terminal domain of CACNA1C, but has an opposite effect on channel function. Suppresses the calcium-dependent inactivation of CACNA1D. Inhibits TRPC5 channels. Prevents NMDA receptor-induced cellular degeneration. Required for the normal transfer of light signals through the retina. The sequence is that of Calcium-binding protein 1 (Cabp1) from Mus musculus (Mouse).